A 427-amino-acid chain; its full sequence is UDP-N-acetyl-D-mannosamine dehydrogenase (427 aa).

The NAD(+) site is built by Tyr19, Ile20, Asp39, Arg44, Thr91, and Thr130. UDP-N-acetyl-alpha-D-mannosaminouronate is bound by residues Arg155, Val156, Lys207, Asn211, Arg214, His245, Arg247, and Gly258. Lys207 acts as the Proton donor/acceptor in catalysis. The active-site Nucleophile is the Cys261. Residues Tyr318 and Lys319 each coordinate UDP-N-acetyl-alpha-D-mannosaminouronate. Arg326 is an NAD(+) binding site. Lys404 is a binding site for UDP-N-acetyl-alpha-D-mannosaminouronate.

Belongs to the UDP-glucose/GDP-mannose dehydrogenase family. As to quaternary structure, homotetramer; probably dimer of dimers.

It catalyses the reaction UDP-N-acetyl-alpha-D-mannosamine + 2 NAD(+) + H2O = UDP-N-acetyl-alpha-D-mannosaminouronate + 2 NADH + 3 H(+). Functionally, catalyzes the four-electron oxidation of UDP-N-acetyl-D-mannosamine (UDP-ManNAc), reducing NAD(+) and releasing UDP-N-acetylmannosaminuronic acid (UDP-ManNAcA). Cannot use NADP instead of NAD. This is UDP-N-acetyl-D-mannosamine dehydrogenase (wecC) from Methanococcus maripaludis (strain DSM 14266 / JCM 13030 / NBRC 101832 / S2 / LL).